A 198-amino-acid polypeptide reads, in one-letter code: Probable molybdenum cofactor guanylyltransferase (198 aa).

Residues 9 to 11 (LAG), K22, D66, and D95 contribute to the GTP site. D95 is a binding site for Mg(2+).

The protein belongs to the MobA family. Mg(2+) serves as cofactor.

The protein resides in the cytoplasm. The enzyme catalyses Mo-molybdopterin + GTP + H(+) = Mo-molybdopterin guanine dinucleotide + diphosphate. Transfers a GMP moiety from GTP to Mo-molybdopterin (Mo-MPT) cofactor (Moco or molybdenum cofactor) to form Mo-molybdopterin guanine dinucleotide (Mo-MGD) cofactor. The protein is Probable molybdenum cofactor guanylyltransferase of Clostridium perfringens (strain ATCC 13124 / DSM 756 / JCM 1290 / NCIMB 6125 / NCTC 8237 / Type A).